The following is a 181-amino-acid chain: Isopentenyl-diphosphate Delta-isomerase (181 aa).

Residues His24 and His30 each coordinate Mn(2+). One can recognise a Nudix hydrolase domain in the interval 28–168; that stretch reads LLHLAFSVLL…PDTFSVWFPT (141 aa). Residue Cys68 is part of the active site. Cys68 provides a ligand contact to Mg(2+). Residue His70 coordinates Mn(2+). A Mg(2+)-binding site is contributed by Glu88. Positions 117 and 119 each coordinate Mn(2+). Glu119 is an active-site residue.

It belongs to the IPP isomerase type 1 family. Requires Mg(2+) as cofactor. It depends on Mn(2+) as a cofactor.

It is found in the cytoplasm. The enzyme catalyses isopentenyl diphosphate = dimethylallyl diphosphate. It participates in isoprenoid biosynthesis; dimethylallyl diphosphate biosynthesis; dimethylallyl diphosphate from isopentenyl diphosphate: step 1/1. Functionally, catalyzes the 1,3-allylic rearrangement of the homoallylic substrate isopentenyl (IPP) to its highly electrophilic allylic isomer, dimethylallyl diphosphate (DMAPP). In Aliivibrio fischeri (strain ATCC 700601 / ES114) (Vibrio fischeri), this protein is Isopentenyl-diphosphate Delta-isomerase.